A 301-amino-acid polypeptide reads, in one-letter code: Acetyl-coenzyme A carboxylase carboxyl transferase subunit beta (301 aa).

The CoA carboxyltransferase N-terminal domain maps to 29–298 (LWVKCPETGQ…AEPAEEEAEP (270 aa)).

Belongs to the AccD/PCCB family. As to quaternary structure, acetyl-CoA carboxylase is a heterohexamer composed of biotin carboxyl carrier protein (AccB), biotin carboxylase (AccC) and two subunits each of ACCase subunit alpha (AccA) and ACCase subunit beta (AccD).

Its subcellular location is the cytoplasm. The enzyme catalyses N(6)-carboxybiotinyl-L-lysyl-[protein] + acetyl-CoA = N(6)-biotinyl-L-lysyl-[protein] + malonyl-CoA. It functions in the pathway lipid metabolism; malonyl-CoA biosynthesis; malonyl-CoA from acetyl-CoA: step 1/1. In terms of biological role, component of the acetyl coenzyme A carboxylase (ACC) complex. Biotin carboxylase (BC) catalyzes the carboxylation of biotin on its carrier protein (BCCP) and then the CO(2) group is transferred by the transcarboxylase to acetyl-CoA to form malonyl-CoA. The chain is Acetyl-coenzyme A carboxylase carboxyl transferase subunit beta from Methylobacterium nodulans (strain LMG 21967 / CNCM I-2342 / ORS 2060).